A 208-amino-acid polypeptide reads, in one-letter code: Effector protein MavE (208 aa).

Positions N77–Y80 match the NPxY eukaryotic motif motif. The chain crosses the membrane as a helical span at residues V184–F204.

In terms of assembly, homotrimer.

It is found in the secreted. Its subcellular location is the host vacuole. The protein localises to the host pathogen-containing vacuole. The protein resides in the host pathogen-containing vacuole membrane. In terms of biological role, virulence effector that is indispensable for endoplasmic reticulum (ER)-mediated remodeling of the Legionella pneumophila-containing vacuole (LCV) and lysosomal evasion. Essential for intracellular replication in human monocyte-derived macrophages (hMDMs) and amoebae, as well as for intrapulmonary proliferation in mice. The sequence is that of Effector protein MavE from Legionella pneumophila subsp. pneumophila (strain Philadelphia 1 / ATCC 33152 / DSM 7513).